Here is a 396-residue protein sequence, read N- to C-terminus: Phosphoglycerate kinase (396 aa).

Residues 21 to 23, R36, 59 to 62, R113, and R146 contribute to the substrate site; these read DLN and HLGR. Residues K197, E319, and 345-348 contribute to the ATP site; that span reads GGDT.

This sequence belongs to the phosphoglycerate kinase family. As to quaternary structure, monomer.

The protein localises to the cytoplasm. The catalysed reaction is (2R)-3-phosphoglycerate + ATP = (2R)-3-phospho-glyceroyl phosphate + ADP. It participates in carbohydrate degradation; glycolysis; pyruvate from D-glyceraldehyde 3-phosphate: step 2/5. The sequence is that of Phosphoglycerate kinase from Legionella pneumophila (strain Corby).